The sequence spans 432 residues: FLYWCH-type zinc finger-containing protein peb-1 (432 aa).

The segment at methionine 1 to serine 33 is disordered. The span at serine 9 to serine 26 shows a compositional bias: low complexity. A DNA-binding region (required for DNA-binding) is located at residues methionine 30–proline 188. An FLYWCH-type zinc finger spans residues isoleucine 53–histidine 120. Positions serine 174–asparagine 195 are disordered.

It is found in the nucleus. Functionally, putative transcription factor. Binds to specific sequence motif 5'-[TC][AGT]TGCC[GA][AT]-3' in regulatory elements of target genes such as myosin myo-2. May modulate gene expression, perhaps acting in opposition to transcription factor pha-4. Involved in morphogenesis, perhaps especially in formation of the pharynx. Plays roles in molting, feeding and morphology. The chain is FLYWCH-type zinc finger-containing protein peb-1 from Caenorhabditis briggsae.